We begin with the raw amino-acid sequence, 314 residues long: Basic leucine zipper 63 (314 aa).

Serine 29 carries the phosphoserine; by KIN10 modification. Residues 94 to 177 (KPQDTSGRSD…SRRRKQAHLS (84 aa)) form a disordered region. Polar residues predominate over residues 96-133 (QDTSGRSDNGGANESEQASLASSKATPMMSSAITSGSE). The bZIP domain occupies 151–214 (NVKRVKRMLS…NDASVENRVL (64 aa)). Residues 153–172 (KRVKRMLSNRESARRSRRRK) are basic motif. The Nuclear localization signal 1 signature appears at 155–162 (VKRMLSNR). The tract at residues 179 to 193 (LETQVSQLRVENSKL) is leucine-zipper. The interval 253-274 (SLPSETSNSPDTTSSQVTTPEI) is disordered. Phosphoserine; by KIN10 is present on residues serine 294 and serine 300. A Nuclear localization signal 2 motif is present at residues 295-302 (MRRVESLE).

It belongs to the bZIP family. Homodimer. Forms a heterodimer with LSD1, BZIP1, BZIP2, BZIP9, BZIP10, BZIP11, BZIP25, BZIP44 and BZIP53. Interacts with KIN10 and SNF4. Component of a ternary complex composed of BZIP2-BZIP63 heterodimer and KIN10. Post-translationally, phosphorylated. The phosphorylation at Ser-29, Ser-294 and Ser-300 by KIN10 strongly enhances its ability to form homo- as well as heterodimers and are then essential for its transcriptional activity. Expressed in roots, shoots, young leaves, pollen, and flowers.

It is found in the nucleus. With respect to regulation, up-regulated by KIN10 under a phosphorylation-dependent manner. Functionally, transcription factor involved in controlling responses to starvation. BZIP2-BZIP63-KIN10 complex binds to the ETFQO promoter to up-regulate its transcription. The sequence is that of Basic leucine zipper 63 (BZIP63) from Arabidopsis thaliana (Mouse-ear cress).